Reading from the N-terminus, the 209-residue chain is Kynurenine formamidase (209 aa).

Residue tryptophan 20 coordinates substrate. Zn(2+) contacts are provided by histidine 50, histidine 54, and aspartate 56. Histidine 60 functions as the Proton donor/acceptor in the catalytic mechanism. Zn(2+)-binding residues include histidine 161 and glutamate 173.

Belongs to the Cyclase 1 superfamily. KynB family. As to quaternary structure, homodimer. Zn(2+) is required as a cofactor.

It carries out the reaction N-formyl-L-kynurenine + H2O = L-kynurenine + formate + H(+). It participates in amino-acid degradation; L-tryptophan degradation via kynurenine pathway; L-kynurenine from L-tryptophan: step 2/2. In terms of biological role, catalyzes the hydrolysis of N-formyl-L-kynurenine to L-kynurenine, the second step in the kynurenine pathway of tryptophan degradation. This Bacillus mycoides (strain KBAB4) (Bacillus weihenstephanensis) protein is Kynurenine formamidase.